The following is a 431-amino-acid chain: MDWDLNAAGAWDLAELEQDHAAAAPSSGGHAANAAAAGTGTESRPPAPGAAGAPAECSVDLKLGGMGECEPGAARREREAAAGAAKRPRPAGPGGQQQQQCPSCAVDGCRADLGKCRDYHRRHKVCEAHSKTPVVVVAGREMRFCQQCSRFHLLAEFDADKRSCRKRLDGHNRRRRKPQPDTMASASFIASQQGTRFSPFAHPRLEASWPPGVMKTEESPYHITHQIPLGSSSSSRQQHFVALGAATPAYAKEGRRFPFLQEGEISFATGVVLEPPAAAPACQPLLRTGAPSESSGAGGSKMFSDQGLARVLDSDCALSLLSAPANSSGIDVSRMVRPTEHVPMAQQPVVPGLQFGSASWFPRPQASTGGSFVPFCPAAVEGEQQLNAVLGPNDSEVSMNYGGMFHVGGGSGGGEGSSDGGTSSSMPFSWQ.

Disordered regions lie at residues 18–55 (QDHA…GAPA) and 68–102 (ECEP…QQCP). The span at 21 to 41 (AAAAPSSGGHAANAAAAGTGT) shows a compositional bias: low complexity. Residues 101–178 (CPSCAVDGCR…DGHNRRRRKP (78 aa)) form an SBP-type zinc finger. Zn(2+) contacts are provided by Cys-104, Cys-109, Cys-126, His-129, Cys-145, Cys-148, His-152, and Cys-164. Over residues 408–419 (GGGSGGGEGSSD) the composition is skewed to gly residues. The interval 408-431 (GGGSGGGEGSSDGGTSSSMPFSWQ) is disordered.

In terms of assembly, monomer and homodimer. Strongly expressed in immature ears and weakly in husks. Found in the inflorescence meristem of the developing ear, in the spikelet pair primordia, the glume primordia, the cupule forming region and other floral organs. Not detected in other tissues.

SBP transcriptional regulator probably involved in the domestication of maize. Acts as a transcriptional repressor binding to a 5'-GTAC-3' motif. May repress the growth of lateral branches in length and numbers. The chain is Teosinte glume architecture 1 from Zea mays (Maize).